The primary structure comprises 319 residues: Ferrochelatase (319 aa).

Fe cation is bound by residues H192 and E271.

This sequence belongs to the ferrochelatase family.

The protein resides in the cytoplasm. It catalyses the reaction heme b + 2 H(+) = protoporphyrin IX + Fe(2+). It functions in the pathway porphyrin-containing compound metabolism; protoheme biosynthesis; protoheme from protoporphyrin-IX: step 1/1. Its function is as follows. Catalyzes the ferrous insertion into protoporphyrin IX. This is Ferrochelatase from Geotalea uraniireducens (strain Rf4) (Geobacter uraniireducens).